Here is a 1333-residue protein sequence, read N- to C-terminus: Inner capsid protein VP1 (1333 aa).

Over residues 1-10 (MHSTTNNSNK) the composition is skewed to polar residues. The tract at residues 1–93 (MHSTTNNSNK…MDMEKAAETT (93 aa)) is disordered. Basic and acidic residues predominate over residues 11-20 (RNNEEKHKQP). A compositionally biased stretch (polar residues) spans 64–82 (DGASRSGTNAKVATASSAR).

It belongs to the turreted BTV-fold inner capsid family. In terms of assembly, homodecamer; each decamer is made up of two conformers of VP2, called VP2A and VP2B. 12 homodecamers assemble to form an icosahedral capsid.

It is found in the virion. Inner capsid protein that self-assembles to form an icosahedral capsid with a T=2 symmetry, which consists of 120 copies of VP2, with channels at each of its five-fold vertices. This capsid constitutes the innermost concentric layer of the viral mature particle. The polypeptide is Inner capsid protein VP1 (S1) (Lymantria dispar cypovirus 1 (isolate Rao) (LdCPV-1)).